We begin with the raw amino-acid sequence, 330 residues long: Lipoyl synthase (330 aa).

7 residues coordinate [4Fe-4S] cluster: C77, C82, C88, C103, C107, C110, and S317. One can recognise a Radical SAM core domain in the interval 89–306 (FNHGTATFMI…RSEAERMGFE (218 aa)).

The protein belongs to the radical SAM superfamily. Lipoyl synthase family. It depends on [4Fe-4S] cluster as a cofactor.

Its subcellular location is the cytoplasm. The catalysed reaction is [[Fe-S] cluster scaffold protein carrying a second [4Fe-4S](2+) cluster] + N(6)-octanoyl-L-lysyl-[protein] + 2 oxidized [2Fe-2S]-[ferredoxin] + 2 S-adenosyl-L-methionine + 4 H(+) = [[Fe-S] cluster scaffold protein] + N(6)-[(R)-dihydrolipoyl]-L-lysyl-[protein] + 4 Fe(3+) + 2 hydrogen sulfide + 2 5'-deoxyadenosine + 2 L-methionine + 2 reduced [2Fe-2S]-[ferredoxin]. It functions in the pathway protein modification; protein lipoylation via endogenous pathway; protein N(6)-(lipoyl)lysine from octanoyl-[acyl-carrier-protein]: step 2/2. Functionally, catalyzes the radical-mediated insertion of two sulfur atoms into the C-6 and C-8 positions of the octanoyl moiety bound to the lipoyl domains of lipoate-dependent enzymes, thereby converting the octanoylated domains into lipoylated derivatives. The protein is Lipoyl synthase of Actinobacillus pleuropneumoniae serotype 5b (strain L20).